A 654-amino-acid polypeptide reads, in one-letter code: Coiled-coil domain-containing protein 30 (654 aa).

A disordered region spans residues 38-65 (TLESRRDPNSSLQKEFPQHQDEDQSRAA). Residues 53 to 62 (FPQHQDEDQS) are compositionally biased toward basic and acidic residues. 2 coiled-coil regions span residues 97–244 (REER…LDNA) and 276–559 (KSQQ…QIIR). Residues 614 to 654 (AAAIPKSPEPLSRSQDSESGYINVTSLKETHNTQGDQKPEL) are disordered. A compositionally biased stretch (polar residues) spans 625 to 654 (SRSQDSESGYINVTSLKETHNTQGDQKPEL).

This sequence belongs to the prefoldin subunit beta family.

This chain is Coiled-coil domain-containing protein 30 (Ccdc30), found in Mus musculus (Mouse).